The sequence spans 583 residues: Selenocysteine-specific elongation factor (583 aa).

The region spanning 5–203 (RVNVNVGVLG…LLKSQISIPT (199 aa)) is the tr-type G domain. The tract at residues 14–21 (GHIDSGKT) is G1. Residues glycine 19, threonine 21, and alanine 22 each contribute to the GTP site. Position 21 (threonine 21) interacts with Mg(2+). The tract at residues 46–50 (GITLD) is G2. Mg(2+)-binding residues include threonine 48 and aspartate 78. The tract at residues 78–81 (DCPG) is G3. The interval 132-135 (NKID) is G4. 2 residues coordinate GTP: aspartate 135 and lysine 173. Residues 171 to 173 (AAK) form a G5 region. The interval 371 to 390 (MPTATEGDDEADPKAGHAPG) is disordered. Position 524 is a phosphoserine (serine 524). Residues 528 to 562 (KKILTPTLKKRSRAGRGETTKPEEGTERPEPIQPV) are disordered. The residue at position 532 (threonine 532) is a Phosphothreonine. A Nuclear localization signal motif is present at residues 534-540 (TLKKRSR). Over residues 542–557 (GRGETTKPEEGTERPE) the composition is skewed to basic and acidic residues. The residue at position 543 (arginine 543) is an Omega-N-methylarginine.

The protein belongs to the TRAFAC class translation factor GTPase superfamily. Classic translation factor GTPase family. SelB subfamily. Requires Mg(2+) as cofactor. Mn(2+) is required as a cofactor.

Its subcellular location is the cytoplasm. The protein localises to the nucleus. It carries out the reaction GTP + H2O = GDP + phosphate + H(+). Translation factor required for the incorporation of the rare amino acid selenocysteine encoded by UGA codons. Replaces the eRF1-eRF3-GTP ternary complex for the insertion of selenocysteine directed by the UGA codon. Insertion of selenocysteine at UGA codons is mediated by SECISBP2 and EEFSEC: SECISBP2 (1) specifically binds the SECIS sequence once the 80S ribosome encounters an in-frame UGA codon and (2) contacts the RPS27A/eS31 of the 40S ribosome before ribosome stalling. (3) GTP-bound EEFSEC then delivers selenocysteinyl-tRNA(Sec) to the 80S ribosome and adopts a preaccommodated state conformation. (4) After GTP hydrolysis, EEFSEC dissociates from the assembly, selenocysteinyl-tRNA(Sec) accommodates, and peptide bond synthesis and selenoprotein elongation occur. In Mus musculus (Mouse), this protein is Selenocysteine-specific elongation factor (Eefsec).